The following is a 227-amino-acid chain: Cytochrome c oxidase subunit 2 (227 aa).

Residues 1-14 (MAYPFQLGLQDATS) are Mitochondrial intermembrane-facing. A helical membrane pass occupies residues 15 to 45 (PIMEELTNFHDHTLMIVFLISSLVLYIISLM). The Mitochondrial matrix portion of the chain corresponds to 46–59 (LTTKLTHTSTMDAQ). The chain crosses the membrane as a helical span at residues 60 to 87 (EVETIWTILPAAILILIALPSLRILYMM). Over 88 to 227 (DEINNPVLTV…YFENWSTSMI (140 aa)) the chain is Mitochondrial intermembrane. Residues H161, C196, E198, C200, H204, and M207 each coordinate Cu cation. Mg(2+) is bound at residue E198. Phosphotyrosine is present on Y218.

It belongs to the cytochrome c oxidase subunit 2 family. Component of the cytochrome c oxidase (complex IV, CIV), a multisubunit enzyme composed of 14 subunits. The complex is composed of a catalytic core of 3 subunits MT-CO1, MT-CO2 and MT-CO3, encoded in the mitochondrial DNA, and 11 supernumerary subunits COX4I, COX5A, COX5B, COX6A, COX6B, COX6C, COX7A, COX7B, COX7C, COX8 and NDUFA4, which are encoded in the nuclear genome. The complex exists as a monomer or a dimer and forms supercomplexes (SCs) in the inner mitochondrial membrane with NADH-ubiquinone oxidoreductase (complex I, CI) and ubiquinol-cytochrome c oxidoreductase (cytochrome b-c1 complex, complex III, CIII), resulting in different assemblies (supercomplex SCI(1)III(2)IV(1) and megacomplex MCI(2)III(2)IV(2)). Found in a complex with TMEM177, COA6, COX18, COX20, SCO1 and SCO2. Interacts with TMEM177 in a COX20-dependent manner. Interacts with COX20. Interacts with COX16. Cu cation serves as cofactor.

It localises to the mitochondrion inner membrane. It catalyses the reaction 4 Fe(II)-[cytochrome c] + O2 + 8 H(+)(in) = 4 Fe(III)-[cytochrome c] + 2 H2O + 4 H(+)(out). Its function is as follows. Component of the cytochrome c oxidase, the last enzyme in the mitochondrial electron transport chain which drives oxidative phosphorylation. The respiratory chain contains 3 multisubunit complexes succinate dehydrogenase (complex II, CII), ubiquinol-cytochrome c oxidoreductase (cytochrome b-c1 complex, complex III, CIII) and cytochrome c oxidase (complex IV, CIV), that cooperate to transfer electrons derived from NADH and succinate to molecular oxygen, creating an electrochemical gradient over the inner membrane that drives transmembrane transport and the ATP synthase. Cytochrome c oxidase is the component of the respiratory chain that catalyzes the reduction of oxygen to water. Electrons originating from reduced cytochrome c in the intermembrane space (IMS) are transferred via the dinuclear copper A center (CU(A)) of subunit 2 and heme A of subunit 1 to the active site in subunit 1, a binuclear center (BNC) formed by heme A3 and copper B (CU(B)). The BNC reduces molecular oxygen to 2 water molecules using 4 electrons from cytochrome c in the IMS and 4 protons from the mitochondrial matrix. The chain is Cytochrome c oxidase subunit 2 (MT-CO2) from Arvicanthis somalicus (Neumann's grass rat).